We begin with the raw amino-acid sequence, 247 residues long: Large ribosomal subunit protein uL3 (247 aa).

Disordered regions lie at residues 140–164 (SHRS…KMPG) and 212–247 (LPKE…KEGA). The residue at position 151 (Q151) is an N5-methylglutamine. Residues 232–247 (DEDKAPADTPAEKEGA) are compositionally biased toward basic and acidic residues.

It belongs to the universal ribosomal protein uL3 family. In terms of assembly, part of the 50S ribosomal subunit. Forms a cluster with proteins L14 and L19. In terms of processing, methylated by PrmB.

One of the primary rRNA binding proteins, it binds directly near the 3'-end of the 23S rRNA, where it nucleates assembly of the 50S subunit. In Nitrobacter winogradskyi (strain ATCC 25391 / DSM 10237 / CIP 104748 / NCIMB 11846 / Nb-255), this protein is Large ribosomal subunit protein uL3.